The following is a 397-amino-acid chain: Elongation factor Tu (397 aa).

In terms of domain architecture, tr-type G spans 10–206 (KPHCNIGTIG…AVDTWIPDPQ (197 aa)). The tract at residues 19-26 (GHVDHGKT) is G1. Position 19 to 26 (19 to 26 (GHVDHGKT)) interacts with GTP. T26 serves as a coordination point for Mg(2+). The G2 stretch occupies residues 61 to 65 (GITIS). Positions 82-85 (DCPG) are G3. Residues 82-86 (DCPGH) and 137-140 (NKCD) contribute to the GTP site. Positions 137–140 (NKCD) are G4. The interval 175-177 (SAL) is G5.

Belongs to the TRAFAC class translation factor GTPase superfamily. Classic translation factor GTPase family. EF-Tu/EF-1A subfamily. In terms of assembly, monomer.

It localises to the cytoplasm. It catalyses the reaction GTP + H2O = GDP + phosphate + H(+). Its function is as follows. GTP hydrolase that promotes the GTP-dependent binding of aminoacyl-tRNA to the A-site of ribosomes during protein biosynthesis. In Lachnoclostridium phytofermentans (strain ATCC 700394 / DSM 18823 / ISDg) (Clostridium phytofermentans), this protein is Elongation factor Tu.